Reading from the N-terminus, the 166-residue chain is Putative universal stress protein SA1532 (166 aa).

This sequence belongs to the universal stress protein A family.

The protein localises to the cytoplasm. The chain is Putative universal stress protein SA1532 from Staphylococcus aureus (strain N315).